The primary structure comprises 111 residues: Universal stress protein B (111 aa).

A run of 2 helical transmembrane segments spans residues 1–21 and 90–110; these read MIST…NMAR and FILT…LMIW.

The protein belongs to the universal stress protein B family.

The protein resides in the cell inner membrane. In Klebsiella pneumoniae (strain 342), this protein is Universal stress protein B.